Here is an 89-residue protein sequence, read N- to C-terminus: Large ribosomal subunit protein eL43 (89 aa).

The interval M1–I28 is disordered. The C4-type zinc-finger motif lies at C38–C59.

This sequence belongs to the eukaryotic ribosomal protein eL43 family. Zn(2+) is required as a cofactor.

In Methanosphaera stadtmanae (strain ATCC 43021 / DSM 3091 / JCM 11832 / MCB-3), this protein is Large ribosomal subunit protein eL43.